We begin with the raw amino-acid sequence, 513 residues long: ATP synthase subunit alpha (513 aa).

An ATP-binding site is contributed by 169–176; it reads GDRQIGKT.

Belongs to the ATPase alpha/beta chains family. In terms of assembly, F-type ATPases have 2 components, CF(1) - the catalytic core - and CF(0) - the membrane proton channel. CF(1) has five subunits: alpha(3), beta(3), gamma(1), delta(1), epsilon(1). CF(0) has three main subunits: a(1), b(2) and c(9-12). The alpha and beta chains form an alternating ring which encloses part of the gamma chain. CF(1) is attached to CF(0) by a central stalk formed by the gamma and epsilon chains, while a peripheral stalk is formed by the delta and b chains.

It localises to the cell inner membrane. It catalyses the reaction ATP + H2O + 4 H(+)(in) = ADP + phosphate + 5 H(+)(out). Functionally, produces ATP from ADP in the presence of a proton gradient across the membrane. The alpha chain is a regulatory subunit. This Shewanella piezotolerans (strain WP3 / JCM 13877) protein is ATP synthase subunit alpha.